The following is a 216-amino-acid chain: Guanylate kinase (216 aa).

Residues 11–189 (GVLIVISGPS…AVKKIEAILL (179 aa)) enclose the Guanylate kinase-like domain. Residue 18–25 (GPSGAGKG) coordinates ATP.

The protein belongs to the guanylate kinase family.

It localises to the cytoplasm. The catalysed reaction is GMP + ATP = GDP + ADP. Functionally, essential for recycling GMP and indirectly, cGMP. This is Guanylate kinase (gmk) from Clostridium perfringens (strain 13 / Type A).